We begin with the raw amino-acid sequence, 97 residues long: Aspartyl/glutamyl-tRNA(Asn/Gln) amidotransferase subunit C (97 aa).

The tract at residues 74 to 97 (AEQALDQAPASQRDRFEVPRILGE) is disordered. The span at 85–97 (QRDRFEVPRILGE) shows a compositional bias: basic and acidic residues.

The protein belongs to the GatC family. Heterotrimer of A, B and C subunits.

The catalysed reaction is L-glutamyl-tRNA(Gln) + L-glutamine + ATP + H2O = L-glutaminyl-tRNA(Gln) + L-glutamate + ADP + phosphate + H(+). It carries out the reaction L-aspartyl-tRNA(Asn) + L-glutamine + ATP + H2O = L-asparaginyl-tRNA(Asn) + L-glutamate + ADP + phosphate + 2 H(+). Its function is as follows. Allows the formation of correctly charged Asn-tRNA(Asn) or Gln-tRNA(Gln) through the transamidation of misacylated Asp-tRNA(Asn) or Glu-tRNA(Gln) in organisms which lack either or both of asparaginyl-tRNA or glutaminyl-tRNA synthetases. The reaction takes place in the presence of glutamine and ATP through an activated phospho-Asp-tRNA(Asn) or phospho-Glu-tRNA(Gln). This Corynebacterium kroppenstedtii (strain DSM 44385 / JCM 11950 / CIP 105744 / CCUG 35717) protein is Aspartyl/glutamyl-tRNA(Asn/Gln) amidotransferase subunit C.